The sequence spans 202 residues: Orotate phosphoribosyltransferase (202 aa).

Residues Lys-93 and Glu-113 to Ser-121 each bind 5-phospho-alpha-D-ribose 1-diphosphate. Thr-117 and Arg-145 together coordinate orotate.

This sequence belongs to the purine/pyrimidine phosphoribosyltransferase family. PyrE subfamily. As to quaternary structure, homodimer. Mg(2+) is required as a cofactor.

It catalyses the reaction orotidine 5'-phosphate + diphosphate = orotate + 5-phospho-alpha-D-ribose 1-diphosphate. Its pathway is pyrimidine metabolism; UMP biosynthesis via de novo pathway; UMP from orotate: step 1/2. In terms of biological role, catalyzes the transfer of a ribosyl phosphate group from 5-phosphoribose 1-diphosphate to orotate, leading to the formation of orotidine monophosphate (OMP). The protein is Orotate phosphoribosyltransferase of Campylobacter jejuni subsp. jejuni serotype O:2 (strain ATCC 700819 / NCTC 11168).